We begin with the raw amino-acid sequence, 199 residues long: Thymidylate kinase (199 aa).

G7–S14 serves as a coordination point for ATP.

Belongs to the thymidylate kinase family.

It catalyses the reaction dTMP + ATP = dTDP + ADP. Its function is as follows. Phosphorylation of dTMP to form dTDP in both de novo and salvage pathways of dTTP synthesis. This Neorickettsia sennetsu (strain ATCC VR-367 / Miyayama) (Ehrlichia sennetsu) protein is Thymidylate kinase.